The chain runs to 433 residues: Probable imidazolonepropionase (433 aa).

The 4-imidazolone-5-propanoate site is built by Tyr-160 and His-193. Residue Tyr-160 coordinates N-formimidoyl-L-glutamate. A Fe(3+)-binding site is contributed by His-261. His-261 serves as a coordination point for Zn(2+). Residue Glu-264 coordinates 4-imidazolone-5-propanoate. Position 335 (Asp-335) interacts with Fe(3+). Asp-335 is a binding site for Zn(2+). Asn-337 serves as a coordination point for N-formimidoyl-L-glutamate.

The protein belongs to the metallo-dependent hydrolases superfamily. HutI family. Zn(2+) serves as cofactor. Requires Fe(3+) as cofactor.

The catalysed reaction is 4-imidazolone-5-propanoate + H2O = N-formimidoyl-L-glutamate. The protein operates within amino-acid degradation; L-histidine degradation into L-glutamate; N-formimidoyl-L-glutamate from L-histidine: step 3/3. In Danio rerio (Zebrafish), this protein is Probable imidazolonepropionase (amdhd1).